Reading from the N-terminus, the 610-residue chain is UvrABC system protein C (610 aa).

One can recognise a GIY-YIG domain in the interval 16–94; sequence SQPGVYRMYD…IKLYQPRYNV (79 aa). The 36-residue stretch at 204–239 folds into the UVR domain; it reads DQVLTQLIARMEKASQDLAFEEAARIRDQIQAVRRV.

This sequence belongs to the UvrC family. As to quaternary structure, interacts with UvrB in an incision complex.

It localises to the cytoplasm. Its function is as follows. The UvrABC repair system catalyzes the recognition and processing of DNA lesions. UvrC both incises the 5' and 3' sides of the lesion. The N-terminal half is responsible for the 3' incision and the C-terminal half is responsible for the 5' incision. The polypeptide is UvrABC system protein C (Salmonella paratyphi B (strain ATCC BAA-1250 / SPB7)).